The sequence spans 572 residues: Zyxin (572 aa).

At Ala-2 the chain carries N-acetylalanine. Residues 23–351 (QKKFGPVVAP…VRSPGAPGPL (329 aa)) are disordered. Composition is skewed to pro residues over residues 63 to 78 (IPPP…PPPL) and 93 to 108 (FPPP…PPAP). Phosphoserine occurs at positions 116, 142, 143, 169, and 170. Positions 143-156 (SIDLEIDSLSSLLD) are enriched in low complexity. The residue at position 179 (Thr-179) is a Phosphothreonine. Low complexity predominate over residues 202–239 (SPSSSQPLPQVPAPAQSQTQFHVQPQPQPKPQVQLHVQ). Residues 240–252 (SQTQPVSLANTQP) are compositionally biased toward polar residues. Arg-253 bears the Asymmetric dimethylarginine mark. Residues 253-265 (RGPPASSPAPAPK) show a composition bias toward pro residues. At Ser-259 the chain carries Phosphoserine. Position 265 is an N6-acetyllysine (Lys-265). At Ser-267 the chain carries Phosphoserine. Thr-270 bears the Phosphothreonine mark. At Lys-272 the chain carries N6-acetyllysine. Position 274 is a phosphothreonine (Thr-274). Residue Lys-279 is modified to N6-acetyllysine. Phosphoserine is present on residues Ser-281, Ser-288, and Ser-308. Polar residues predominate over residues 305–318 (GTGSPQPPSFTYAQ). Residues 319-330 (QREKPRVQEKQH) are compositionally biased toward basic and acidic residues. Ser-344 is subject to Phosphoserine. LIM zinc-binding domains lie at 384–443 (CGRC…TLEK), 444–503 (CNTC…YAPR), and 504–570 (CSVC…TARA).

Belongs to the zyxin/ajuba family. As to quaternary structure, interacts with HPV type 6 protein E6. Does not interact significantly with E6 proteins from HPV types 11, 16, or 18. Interacts, via the Pro-rich regions, with the EVH1 domains of ENAH, EVL and VASP. Interacts with the first LIM domain of TES. Interacts with NEBL (isoform 2). Interacts with SYNPO2. (Microbial infection) Interacts with human papillomavirus type 6/HPV6 protein E6. Does not interact significantly with E6 proteins from HPV types 11, 16, or 18.

It is found in the cytoplasm. The protein localises to the cytoskeleton. Its subcellular location is the nucleus. It localises to the cell junction. The protein resides in the focal adhesion. Adhesion plaque protein. Binds alpha-actinin and the CRP protein. Important for targeting TES and ENA/VASP family members to focal adhesions and for the formation of actin-rich structures. May be a component of a signal transduction pathway that mediates adhesion-stimulated changes in gene expression. This is Zyxin (ZYX) from Homo sapiens (Human).